A 132-amino-acid chain; its full sequence is Vesicle transport protein GOT1A (132 aa).

The Cytoplasmic segment spans residues 1–9 (MISITEWQK). A helical membrane pass occupies residues 10 to 30 (IGVGITGFGIFFILFGTLLYF). Residue Asp31 is a topological domain, lumenal. The chain crosses the membrane as a helical span at residues 32 to 52 (SVLLAFGNLLFLTGLSLIIGL). The Cytoplasmic portion of the chain corresponds to 53 to 68 (RKTFWFFFQRHKLKGT). Residues 69–89 (SFLLGGVVIVLLRWPLLGMFL) form a helical membrane-spanning segment. The Lumenal portion of the chain corresponds to 90 to 100 (ETYGFFSLFKG). Residues 101–121 (FFPVAFGFLGNVCNIPFLGAL) form a helical membrane-spanning segment. The Cytoplasmic portion of the chain corresponds to 122 to 132 (FRRLQGTSSMV).

Belongs to the GOT1 family.

The protein localises to the golgi apparatus membrane. Functionally, may be involved in fusion of ER-derived transport vesicles with the Golgi complex. This Homo sapiens (Human) protein is Vesicle transport protein GOT1A.